The sequence spans 667 residues: Cysteine-rich receptor-like protein kinase 11 (667 aa).

The signal sequence occupies residues 1 to 24 (MKQRSLFSVLCFFFISFGVASVSA). Gnk2-homologous domains lie at 25–129 (QTCT…NTSF) and 135–248 (LNPR…LYTY). Topologically, residues 25–292 (QTCTTDKGTF…SKGISAGVVV (268 aa)) are extracellular. N-linked (GlcNAc...) asparagine glycans are attached at residues asparagine 37, asparagine 54, asparagine 64, asparagine 106, asparagine 126, asparagine 150, and asparagine 254. Positions 259–268 (SPPPEPPVTV) are enriched in pro residues. Residues 259-282 (SPPPEPPVTVPQPAGDQDNPTNND) form a disordered region. The N-linked (GlcNAc...) asparagine glycan is linked to asparagine 281. A helical transmembrane segment spans residues 293 to 313 (AITVPTVIAILILLVLGFVLF). Over 314-667 (RRRKSYQRTK…YTSKSSSFSS (354 aa)) the chain is Cytoplasmic. Residues 350–629 (FSTSNKLGEG…IILMLTSNTI (280 aa)) form the Protein kinase domain. Residues 356 to 364 (LGEGGFGAV) and lysine 378 contribute to the ATP site. Tyrosine 423 is subject to Phosphotyrosine. Aspartate 475 functions as the Proton acceptor in the catalytic mechanism. Residue serine 479 is modified to Phosphoserine. Threonine 515 is modified (phosphothreonine). A Phosphotyrosine modification is found at tyrosine 523.

The protein belongs to the protein kinase superfamily. Ser/Thr protein kinase family. CRK subfamily. In terms of tissue distribution, detected in root, stem, leaf and flower.

It is found in the membrane. The catalysed reaction is L-seryl-[protein] + ATP = O-phospho-L-seryl-[protein] + ADP + H(+). It carries out the reaction L-threonyl-[protein] + ATP = O-phospho-L-threonyl-[protein] + ADP + H(+). This chain is Cysteine-rich receptor-like protein kinase 11 (CRK11), found in Arabidopsis thaliana (Mouse-ear cress).